The following is a 358-amino-acid chain: Methylthioribose-1-phosphate isomerase (358 aa).

Substrate contacts are provided by residues 54–56 (RGA), Arg-96, and Gln-205. The active-site Proton donor is Asp-246. 256–257 (NK) lines the substrate pocket.

This sequence belongs to the eIF-2B alpha/beta/delta subunits family. MtnA subfamily.

The catalysed reaction is 5-(methylsulfanyl)-alpha-D-ribose 1-phosphate = 5-(methylsulfanyl)-D-ribulose 1-phosphate. It functions in the pathway amino-acid biosynthesis; L-methionine biosynthesis via salvage pathway; L-methionine from S-methyl-5-thio-alpha-D-ribose 1-phosphate: step 1/6. Functionally, catalyzes the interconversion of methylthioribose-1-phosphate (MTR-1-P) into methylthioribulose-1-phosphate (MTRu-1-P). The polypeptide is Methylthioribose-1-phosphate isomerase (Pseudomonas fluorescens (strain Pf0-1)).